Reading from the N-terminus, the 279-residue chain is Large ribosomal subunit protein uL2 (279 aa).

Residues 218 to 279 form a disordered region; sequence RPQTRGSAMN…ITRRKSNPKR (62 aa). A compositionally biased stretch (basic residues) spans 255–279; that stretch reads KGSKTRRKKASDKLIITRRKSNPKR.

This sequence belongs to the universal ribosomal protein uL2 family. Part of the 50S ribosomal subunit. Forms a bridge to the 30S subunit in the 70S ribosome.

In terms of biological role, one of the primary rRNA binding proteins. Required for association of the 30S and 50S subunits to form the 70S ribosome, for tRNA binding and peptide bond formation. It has been suggested to have peptidyltransferase activity; this is somewhat controversial. Makes several contacts with the 16S rRNA in the 70S ribosome. This Sulfurimonas denitrificans (strain ATCC 33889 / DSM 1251) (Thiomicrospira denitrificans (strain ATCC 33889 / DSM 1251)) protein is Large ribosomal subunit protein uL2.